A 493-amino-acid polypeptide reads, in one-letter code: GTPase Der (493 aa).

EngA-type G domains are found at residues 3 to 166 (PVVA…SGKG) and 207 to 380 (LKLA…DCAT). GTP-binding positions include 9–16 (GRPNVGKS), 56–60 (DTGGI), 118–121 (NKTD), 213–220 (GKPNVGKS), 260–264 (DTAGV), and 325–328 (NKWD). The KH-like domain maps to 381-465 (RRVNTSLLTR…PIRIQFKEGA (85 aa)).

The protein belongs to the TRAFAC class TrmE-Era-EngA-EngB-Septin-like GTPase superfamily. EngA (Der) GTPase family. As to quaternary structure, associates with the 50S ribosomal subunit.

Its function is as follows. GTPase that plays an essential role in the late steps of ribosome biogenesis. The chain is GTPase Der from Photorhabdus laumondii subsp. laumondii (strain DSM 15139 / CIP 105565 / TT01) (Photorhabdus luminescens subsp. laumondii).